A 2058-amino-acid polypeptide reads, in one-letter code: Protein Daple (2058 aa).

Residues 11–131 form the Calponin-homology (CH) domain; the sequence is HFLESPLVTW…KILLLMLGCA (121 aa). Coiled coils occupy residues 195–221, 247–428, 455–1016, 1043–1082, and 1108–1388; these read HLKR…DYLQ, EDKK…SMNE, ELNE…LRGA, ELLK…NLNL, and ANLQ…KFYD. Disordered stretches follow at residues 1406–1444, 1480–1592, 1617–1655, 1696–1724, 1831–1857, 1940–1959, and 1988–2051; these read LIKP…MRPL, HRMS…EDMI, TKNR…PGSE, LHPS…LPSA, YSAT…RGNS, LALP…ASSL, and PVRP…PQTV. Positions 1409 to 1418 are enriched in basic and acidic residues; that stretch reads PKKEPSRESV. The span at 1419-1429 shows a compositional bias: polar residues; sequence KSPTDVQSKTM. Positions 1494-1506 are enriched in basic and acidic residues; the sequence is GPEHLSRSRRMES. A compositionally biased stretch (polar residues) spans 1552 to 1577; the sequence is NAGSSRVPWTSSLEVSRSASNSSSPL. Short sequence motifs (GBA) lie at residues 1653-1675 and 1676-1697; these read GSEM…PSRR and HSLN…ETLH. Positions 1831–1841 are enriched in polar residues; sequence YSATSSSQSPE. Over residues 2039-2048 the composition is skewed to low complexity; sequence PASPDPSADP. The PDZ-binding motif lies at 2055–2058; that stretch reads YGCV.

Belongs to the CCDC88 family. Interacts with dvl2/dsh via the PDZ-binding motif. As to expression, expressed weakly in gastrulae, with slightly stronger expression in the dorsal region. In neurulae, expressed in the neural plate with strong expression in the presumptive mesencephalic region. At the tailbud stage, expressed in somatic cells and in part of the tail. Also strongly expressed in regions of the head including eye vesicles, otic vesicles, olfactory placode and the pharyngeal cavity.

It localises to the cytoplasm. Its subcellular location is the cell junction. Functionally, positive regulator of Wnt signaling, acting synergistically with dvl2/dsh. Functions upstream of ctnnb1/beta-catenin in the canonical Wnt pathway, and also activates jnk in the Wnt/planar cell polarity (PCP) pathway. Acts as a non-receptor guanine nucleotide exchange factor which binds to and activates guanine nucleotide-binding protein G(i) alpha subunits. This promotes apical cell constriction and subsequent bending of the neural plate during neurulation via arhgef18. This chain is Protein Daple (ccdc88c), found in Xenopus laevis (African clawed frog).